Reading from the N-terminus, the 156-residue chain is Transcription antitermination protein NusB (156 aa).

This sequence belongs to the NusB family.

Involved in transcription antitermination. Required for transcription of ribosomal RNA (rRNA) genes. Binds specifically to the boxA antiterminator sequence of the ribosomal RNA (rrn) operons. This Vibrio cholerae serotype O1 (strain ATCC 39541 / Classical Ogawa 395 / O395) protein is Transcription antitermination protein NusB.